A 196-amino-acid polypeptide reads, in one-letter code: Nucleoside triphosphate pyrophosphatase (196 aa).

Asp-73 acts as the Proton acceptor in catalysis.

Belongs to the Maf family. A divalent metal cation serves as cofactor.

It is found in the cytoplasm. The enzyme catalyses a ribonucleoside 5'-triphosphate + H2O = a ribonucleoside 5'-phosphate + diphosphate + H(+). The catalysed reaction is a 2'-deoxyribonucleoside 5'-triphosphate + H2O = a 2'-deoxyribonucleoside 5'-phosphate + diphosphate + H(+). Its function is as follows. Nucleoside triphosphate pyrophosphatase. May have a dual role in cell division arrest and in preventing the incorporation of modified nucleotides into cellular nucleic acids. This is Nucleoside triphosphate pyrophosphatase from Anaplasma marginale (strain St. Maries).